Here is a 714-residue protein sequence, read N- to C-terminus: Zinc finger matrin-type protein 1 (714 aa).

The Matrin-type 1 zinc finger occupies 89-119 (NFCKPCGVVLQHESERISHFESEIHAQNVKF). Residues 172 to 214 (HYVGKSHSPTQNQSLEEHDQVSPSTCSPKMDEPNTTPAPPPFL) are disordered. Residues 230–254 (YVCHICSITFTSLHMFRSHMQGTEH) form a Matrin-type 2 zinc finger. The segment covering 417–434 (RERVDSEHRQRPCEERFS) has biased composition (basic and acidic residues). 2 disordered regions span residues 417 to 469 (RERV…NDDF) and 571 to 714 (MPAS…ILGF). Polar residues-rich tracts occupy residues 437–446 (APQTYQQEYS) and 575–588 (LSLS…SSYN). The segment covering 609–619 (SHRRRRQKRKR) has biased composition (basic residues). Basic and acidic residues-rich tracts occupy residues 620–632 (HLEE…EKEQ) and 640–662 (SYQD…EDKA). Positions 669–678 (TKHRRKKRKH) are enriched in basic residues.

The protein localises to the nucleus. This Mus musculus (Mouse) protein is Zinc finger matrin-type protein 1 (Zmat1).